The primary structure comprises 982 residues: Polyribonucleotide nucleotidyltransferase 2, mitochondrial (982 aa).

Residues 1 to 39 (MSMAVASLRLLARGGRRRARFPAPLSVPGGRAAFLSGAA) constitute a mitochondrion transit peptide. One can recognise a KH domain in the interval 624 to 678 (PRLATLSFSSDSLRKLLFHRKKIEQETGARVSVSDGTVTIVAKTQPIMDKAIEKV). One can recognise an S1 motif 1 domain in the interval 689 to 757 (GRTYKGVVSS…LRGNIKLSLK (69 aa)). Disordered stretches follow at residues 792 to 814 (PSKDANAEPSISKDEDNMIEETP) and 832 to 892 (QDVT…NDVL). Composition is skewed to low complexity over residues 846–855 (AKSSPKLSKP) and 868–877 (KKTSGASTTA). The region spanning 920–982 (GDVVTAKVYQ…KGIPVFSLLD (63 aa)) is the S1 motif 2 domain.

It belongs to the polyribonucleotide nucleotidyltransferase family.

It is found in the mitochondrion. It carries out the reaction RNA(n+1) + phosphate = RNA(n) + a ribonucleoside 5'-diphosphate. Involved in the 3'-end maturation of mitochondrial mRNAs, rRNAs and tRNAs. Functions as a poly(A) mRNA 3'-5' degrading phosphorylase. The polypeptide is Polyribonucleotide nucleotidyltransferase 2, mitochondrial (PNP2) (Oryza sativa subsp. japonica (Rice)).